We begin with the raw amino-acid sequence, 439 residues long: Trigger factor (439 aa).

The region spanning 162 to 247 (GDTVTIDYVG…IHEVKAKQLP (86 aa)) is the PPIase FKBP-type domain.

It belongs to the FKBP-type PPIase family. Tig subfamily.

Its subcellular location is the cytoplasm. It catalyses the reaction [protein]-peptidylproline (omega=180) = [protein]-peptidylproline (omega=0). Involved in protein export. Acts as a chaperone by maintaining the newly synthesized protein in an open conformation. Functions as a peptidyl-prolyl cis-trans isomerase. The polypeptide is Trigger factor (Lactobacillus delbrueckii subsp. bulgaricus (strain ATCC 11842 / DSM 20081 / BCRC 10696 / JCM 1002 / NBRC 13953 / NCIMB 11778 / NCTC 12712 / WDCM 00102 / Lb 14)).